The primary structure comprises 168 residues: Probable prefoldin subunit 5 (168 aa).

The protein belongs to the prefoldin subunit alpha family. Heterohexamer of two PFD-alpha type and four PFD-beta type subunits.

In terms of biological role, binds specifically to cytosolic chaperonin (c-CPN) and transfers target proteins to it. Binds to nascent polypeptide chain and promotes folding in an environment in which there are many competing pathways for nonnative proteins. The sequence is that of Probable prefoldin subunit 5 from Drosophila melanogaster (Fruit fly).